Reading from the N-terminus, the 428-residue chain is Serine--tRNA ligase (428 aa).

235-237 provides a ligand contact to L-serine; the sequence is TAE. 266 to 268 serves as a coordination point for ATP; it reads RSE. Residue E289 coordinates L-serine. Residue 353–356 participates in ATP binding; it reads EISS. S389 contributes to the L-serine binding site.

This sequence belongs to the class-II aminoacyl-tRNA synthetase family. Type-1 seryl-tRNA synthetase subfamily. As to quaternary structure, homodimer. The tRNA molecule binds across the dimer.

It is found in the cytoplasm. It carries out the reaction tRNA(Ser) + L-serine + ATP = L-seryl-tRNA(Ser) + AMP + diphosphate + H(+). The catalysed reaction is tRNA(Sec) + L-serine + ATP = L-seryl-tRNA(Sec) + AMP + diphosphate + H(+). It participates in aminoacyl-tRNA biosynthesis; selenocysteinyl-tRNA(Sec) biosynthesis; L-seryl-tRNA(Sec) from L-serine and tRNA(Sec): step 1/1. Its function is as follows. Catalyzes the attachment of serine to tRNA(Ser). Is also able to aminoacylate tRNA(Sec) with serine, to form the misacylated tRNA L-seryl-tRNA(Sec), which will be further converted into selenocysteinyl-tRNA(Sec). The sequence is that of Serine--tRNA ligase from Shewanella woodyi (strain ATCC 51908 / MS32).